Reading from the N-terminus, the 191-residue chain is Small ribosomal subunit protein uS7 (191 aa).

The segment at 56–80 is disordered; that stretch reads NKSGEQGDGDGESGGKAGGIKKRSL.

This sequence belongs to the universal ribosomal protein uS7 family. In terms of assembly, part of the 30S ribosomal subunit. Contacts proteins S9 and S11.

Functionally, one of the primary rRNA binding proteins, it binds directly to 16S rRNA where it nucleates assembly of the head domain of the 30S subunit. Is located at the subunit interface close to the decoding center, probably blocks exit of the E-site tRNA. The chain is Small ribosomal subunit protein uS7 from Coxiella burnetii (strain RSA 493 / Nine Mile phase I).